A 325-amino-acid chain; its full sequence is NADH-quinone oxidoreductase subunit H (325 aa).

A run of 8 helical transmembrane segments spans residues 11–31 (ILLTILKAVVILLVVVTCGAF), 81–101 (VIFTLAPMIAFTSLLLAFAIV), 114–134 (IGILFFLMMAGLAVYAVLFAG), 154–174 (LSYEVFLGLSLMGVVAQAGSF), 186–206 (VWNVIPQFFGFITFAIAGVAV), 237–257 (FFVGEYIGIVTISALMVTLFF), 265–285 (LPPFIWFALKTAFFMMMFILI), and 304–324 (ICLPLTLINLLVTAAVILWQA).

It belongs to the complex I subunit 1 family. NDH-1 is composed of 13 different subunits. Subunits NuoA, H, J, K, L, M, N constitute the membrane sector of the complex.

The protein localises to the cell inner membrane. It carries out the reaction a quinone + NADH + 5 H(+)(in) = a quinol + NAD(+) + 4 H(+)(out). Functionally, NDH-1 shuttles electrons from NADH, via FMN and iron-sulfur (Fe-S) centers, to quinones in the respiratory chain. The immediate electron acceptor for the enzyme in this species is believed to be ubiquinone. Couples the redox reaction to proton translocation (for every two electrons transferred, four hydrogen ions are translocated across the cytoplasmic membrane), and thus conserves the redox energy in a proton gradient. This subunit may bind ubiquinone. The sequence is that of NADH-quinone oxidoreductase subunit H from Shigella flexneri serotype 5b (strain 8401).